The following is a 61-amino-acid chain: Bacteriocin leucocin-A (61 aa).

The propeptide occupies 1–24 (MMNMKPTESYEQLDNSALEQVVGG). Cys33 and Cys38 form a disulfide bridge.

This sequence belongs to the bacteriocin class IIA/YGNGV family.

It is found in the secreted. Its function is as follows. Inhibits a wide spectrum of lactic acid bacteria. This chain is Bacteriocin leucocin-A (lcnA), found in Leuconostoc gelidum.